The primary structure comprises 529 residues: Bifunctional purine biosynthesis protein PurH (529 aa).

One can recognise an MGS-like domain in the interval 1–148 (MQQRRPVRRA…KNHKDVAIVV (148 aa)). Position 287 is an N6-acetyllysine (Lys287).

Belongs to the PurH family.

The enzyme catalyses (6R)-10-formyltetrahydrofolate + 5-amino-1-(5-phospho-beta-D-ribosyl)imidazole-4-carboxamide = 5-formamido-1-(5-phospho-D-ribosyl)imidazole-4-carboxamide + (6S)-5,6,7,8-tetrahydrofolate. The catalysed reaction is IMP + H2O = 5-formamido-1-(5-phospho-D-ribosyl)imidazole-4-carboxamide. It participates in purine metabolism; IMP biosynthesis via de novo pathway; 5-formamido-1-(5-phospho-D-ribosyl)imidazole-4-carboxamide from 5-amino-1-(5-phospho-D-ribosyl)imidazole-4-carboxamide (10-formyl THF route): step 1/1. It functions in the pathway purine metabolism; IMP biosynthesis via de novo pathway; IMP from 5-formamido-1-(5-phospho-D-ribosyl)imidazole-4-carboxamide: step 1/1. This chain is Bifunctional purine biosynthesis protein PurH, found in Escherichia coli O17:K52:H18 (strain UMN026 / ExPEC).